The sequence spans 387 residues: Patatin-11 (387 aa).

Residues 1 to 23 form the signal peptide; the sequence is MATTKSVLVLIFMILATTSSTFA. The region spanning 32 to 230 is the PNPLA domain; that stretch reads LSTDGGGIKG…TVGDPALLSL (199 aa). The GXGXXG motif lies at 36–41; that stretch reads GGGIKG. Positions 75 to 79 match the GXSXG motif; sequence GTSTG. S77 acts as the Nucleophile in catalysis. The N-linked (GlcNAc...) asparagine glycan is linked to N115. D216 serves as the catalytic Proton acceptor. A DGA/G motif is present at residues 216-218; the sequence is DGG. The stretch at 322-385 forms a coiled coil; that stretch reads ENALNGTTTE…DRKKLRANKA (64 aa). N326 carries N-linked (GlcNAc...) asparagine glycosylation.

Belongs to the patatin family. In terms of tissue distribution, tuber.

The protein localises to the vacuole. Probable lipolytic acyl hydrolase (LAH), an activity which is thought to be involved in the response of tubers to pathogens. The protein is Patatin-11 of Solanum tuberosum (Potato).